The sequence spans 425 residues: Riboflavin biosynthesis protein RibBA (425 aa).

The segment at 1-204 (MTRLDSVERA…IADLIEWRRK (204 aa)) is DHBP synthase. D-ribulose 5-phosphate-binding positions include 28 to 29 (RE), D33, 141 to 145 (RPGHT), and E165. E29 serves as a coordination point for Mg(2+). Position 144 (H144) interacts with Mg(2+). The segment at 205–425 (HEKHIERIAE…HLPGEFGGAL (221 aa)) is GTP cyclohydrolase II. 259–263 (RVHSE) lines the GTP pocket. Positions 264, 275, and 277 each coordinate Zn(2+). Residues Q280, 303–305 (EGR), and T325 contribute to the GTP site. The active-site Proton acceptor; for GTP cyclohydrolase activity is the D337. R339 serves as the catalytic Nucleophile; for GTP cyclohydrolase activity. Positions 360 and 365 each coordinate GTP.

This sequence in the N-terminal section; belongs to the DHBP synthase family. It in the C-terminal section; belongs to the GTP cyclohydrolase II family. Mg(2+) is required as a cofactor. It depends on Mn(2+) as a cofactor. Zn(2+) serves as cofactor.

It catalyses the reaction D-ribulose 5-phosphate = (2S)-2-hydroxy-3-oxobutyl phosphate + formate + H(+). It carries out the reaction GTP + 4 H2O = 2,5-diamino-6-hydroxy-4-(5-phosphoribosylamino)-pyrimidine + formate + 2 phosphate + 3 H(+). The protein operates within cofactor biosynthesis; riboflavin biosynthesis; 2-hydroxy-3-oxobutyl phosphate from D-ribulose 5-phosphate: step 1/1. Its pathway is cofactor biosynthesis; riboflavin biosynthesis; 5-amino-6-(D-ribitylamino)uracil from GTP: step 1/4. Functionally, catalyzes the conversion of D-ribulose 5-phosphate to formate and 3,4-dihydroxy-2-butanone 4-phosphate. In terms of biological role, catalyzes the conversion of GTP to 2,5-diamino-6-ribosylamino-4(3H)-pyrimidinone 5'-phosphate (DARP), formate and pyrophosphate. This is Riboflavin biosynthesis protein RibBA from Mycolicibacterium paratuberculosis (strain ATCC BAA-968 / K-10) (Mycobacterium paratuberculosis).